A 733-amino-acid polypeptide reads, in one-letter code: Catalase-peroxidase 2 (733 aa).

Residues 1-35 are disordered; sequence MAEAETHPPIGESQTEPAESGCPMRIKPPVEGGSN. Residues 106–234 constitute a cross-link (tryptophyl-tyrosyl-methioninium (Trp-Tyr) (with M-260)); it reads WHAAGTYRVE…PXXPHMGLIY (129 aa). The Proton acceptor role is filled by H107. Residues 234–260 constitute a cross-link (tryptophyl-tyrosyl-methioninium (Tyr-Met) (with W-106)); it reads YVNPEGPEGNPDYLAAAIDIRETFGRM. Residue H275 coordinates heme.

The protein belongs to the peroxidase family. Peroxidase/catalase subfamily. In terms of assembly, homodimer or homotetramer. Heme b serves as cofactor. In terms of processing, formation of the three residue Trp-Tyr-Met cross-link is important for the catalase, but not the peroxidase activity of the enzyme.

The catalysed reaction is H2O2 + AH2 = A + 2 H2O. It catalyses the reaction 2 H2O2 = O2 + 2 H2O. In terms of biological role, bifunctional enzyme with both catalase and broad-spectrum peroxidase activity. May play a role in the intracellular survival of mycobacteria. The sequence is that of Catalase-peroxidase 2 from Mycolicibacterium fortuitum (Mycobacterium fortuitum).